Here is a 114-residue protein sequence, read N- to C-terminus: Putative membrane protein insertion efficiency factor (114 aa).

The protein belongs to the UPF0161 family.

Its subcellular location is the cell inner membrane. Its function is as follows. Could be involved in insertion of integral membrane proteins into the membrane. This is Putative membrane protein insertion efficiency factor from Wolinella succinogenes (strain ATCC 29543 / DSM 1740 / CCUG 13145 / JCM 31913 / LMG 7466 / NCTC 11488 / FDC 602W) (Vibrio succinogenes).